The primary structure comprises 200 residues: Ephrin-A2 (200 aa).

Positions 1-22 are cleaved as a signal peptide; that stretch reads MPRWEAAALLAAIVGVCVWSDD. The Ephrin RBD domain occupies 28–161; it reads SDRYAVYWNR…KLKVYVRPTN (134 aa). N36 is a glycosylation site (N-linked (GlcNAc...) asparagine). Cystine bridges form between C61–C101 and C89–C150. N-linked (GlcNAc...) asparagine glycosylation is found at N161 and N175. The GPI-anchor amidated asparagine moiety is linked to residue N175. A propeptide spans 176-200 (removed in mature form); sequence NSCCSLAVPRAVLVAAPVFWTLLGS.

Belongs to the ephrin family. In terms of assembly, binds to the receptor tyrosine kinases EPHA3, EPHA4 and EPHA5. Interacts with EPHA8; activates EPHA8. As to expression, expressed in a gradient across the tectum being more strongly expressed at the posterior pole.

It localises to the cell membrane. In terms of biological role, cell surface GPI-bound ligand for Eph receptors, a family of receptor tyrosine kinases which are crucial for migration, repulsion and adhesion during neuronal, vascular and epithelial development. Binds promiscuously Eph receptors residing on adjacent cells, leading to contact-dependent bidirectional signaling into neighboring cells. The signaling pathway downstream of the receptor is referred to as forward signaling while the signaling pathway downstream of the ephrin ligand is referred to as reverse signaling. With the EPHA2 receptor may play a role in bone remodeling through regulation of osteoclastogenesis and osteoblastogenesis. In Gallus gallus (Chicken), this protein is Ephrin-A2 (EFNA2).